We begin with the raw amino-acid sequence, 98 residues long: Integration host factor subunit alpha (98 aa).

The disordered stretch occupies residues 49–71 (FGNFDLRDKNQRPGRNPKTGEDI).

It belongs to the bacterial histone-like protein family. Heterodimer of an alpha and a beta chain.

In terms of biological role, this protein is one of the two subunits of integration host factor, a specific DNA-binding protein that functions in genetic recombination as well as in transcriptional and translational control. This is Integration host factor subunit alpha from Shewanella amazonensis (strain ATCC BAA-1098 / SB2B).